A 262-amino-acid chain; its full sequence is Adenosylcobinamide-GDP ribazoletransferase (262 aa).

The next 6 membrane-spanning stretches (helical) occupy residues leucine 11–isoleucine 31, tyrosine 43–glutamine 63, leucine 66–phenylalanine 86, alanine 121–phenylalanine 141, alanine 146–phenylalanine 166, and isoleucine 199–alanine 219.

This sequence belongs to the CobS family. Requires Mg(2+) as cofactor.

Its subcellular location is the cell inner membrane. The catalysed reaction is alpha-ribazole + adenosylcob(III)inamide-GDP = adenosylcob(III)alamin + GMP + H(+). It catalyses the reaction alpha-ribazole 5'-phosphate + adenosylcob(III)inamide-GDP = adenosylcob(III)alamin 5'-phosphate + GMP + H(+). The protein operates within cofactor biosynthesis; adenosylcobalamin biosynthesis; adenosylcobalamin from cob(II)yrinate a,c-diamide: step 7/7. Joins adenosylcobinamide-GDP and alpha-ribazole to generate adenosylcobalamin (Ado-cobalamin). Also synthesizes adenosylcobalamin 5'-phosphate from adenosylcobinamide-GDP and alpha-ribazole 5'-phosphate. The sequence is that of Adenosylcobinamide-GDP ribazoletransferase from Shewanella denitrificans (strain OS217 / ATCC BAA-1090 / DSM 15013).